A 362-amino-acid polypeptide reads, in one-letter code: Protein Tob1 (362 aa).

A Bipartite nuclear localization signal motif is present at residues 22–39 (RRRVNIFGEELERLLKKK). The interval 82–92 (VRGNLPQDLSV) is important for nuclear localization. The segment covering 144 to 160 (DPASSVSSSPSPPFGHS) has biased composition (low complexity). The disordered stretch occupies residues 144-171 (DPASSVSSSPSPPFGHSAAVSPTFMPRS). The interval 161–220 (AAVSPTFMPRSTQPLTFTTATFAATKFGSTKMKNSGRSSKVARTSPINLGLTVNVNDLLK) is required for interaction with CPEB3. T204 is subject to Phosphothreonine. The Nuclear export signal motif lies at 228–236 (VHSLYGLGL). The interval 234-284 (LGLGSQQQPQPQPQQQQQQQPSSSQPPPPLPQQQQQQPQQQQQQQQQTSAL) is disordered. Composition is skewed to low complexity over residues 238–256 (SQQQ…QPSS) and 265–280 (QQQQ…QQQQ).

This sequence belongs to the BTG family. In terms of assembly, interacts with ERBB2. Interacts with CNOT7. Interacts with CPEB3 (via C-terminal RNA-binding region); recruits CNOT7 to CPEB3 to form a ternary complex required for mRNA deadenylation and decay. Interacts with CNOT8. Interacts with CPEB4. In terms of processing, phosphorylated on Ser and Thr residues. In terms of tissue distribution, ubiquitous.

It is found in the cytoplasm. Its subcellular location is the nucleus. Anti-proliferative protein; the function is mediated by association with deadenylase subunits of the CCR4-NOT complex. Mediates CPEB3-accelerated mRNA deadenylation by binding to CPEB3 and recruiting CNOT7 which leads to target mRNA deadenylation and decay. In Mus musculus (Mouse), this protein is Protein Tob1 (Tob1).